The following is a 394-amino-acid chain: MNKKTIRDVDVRGKRVFCRVDFNVPMEQGAITDDTRIRAALPTIRYLIEHGAKVILASHLGRPKGKVVEELRLDAVAKRLGELLERPVAKTNEAVGDEVKAAVDRLNEGDVLLLENVRFYPGEEKNDPELAKAFAELADLYVNDAFGAAHRAHASTEGIAHYLPAVAGFLMEKELEVLGKALSNPDRPFTAIIGGAKVKDKIGVIDNLLEKVDNLIIGGGLAYTFVKALGHDVGKSLLEEDKIELAKSFMEKAKEKGVRFYMPVDVVVADRFANDANTKVVPIDAIPADWSALDIGPKTRELYRDVIRESKLVVWNGPMGVFEMDAFAHGTKAIAEALAEALDTYSVIGGGDSAAAVEKFGLADKMDHISTGGGASLEFMEGKQLPGVVALEDK.

Substrate contacts are provided by residues 21–23, Arg36, 59–62, Arg118, and Arg151; these read DFN and HLGR. Residue Ser183 is modified to Phosphoserine. Lys201 contributes to the ATP binding site. Thr299 is modified (phosphothreonine). Residues Asn316, Glu323, and 350-353 each bind ATP; that span reads GGDS.

Belongs to the phosphoglycerate kinase family. As to quaternary structure, monomer.

It localises to the cytoplasm. It carries out the reaction (2R)-3-phosphoglycerate + ATP = (2R)-3-phospho-glyceroyl phosphate + ADP. The protein operates within carbohydrate degradation; glycolysis; pyruvate from D-glyceraldehyde 3-phosphate: step 2/5. This is Phosphoglycerate kinase from Geobacillus stearothermophilus (Bacillus stearothermophilus).